Here is a 110-residue protein sequence, read N- to C-terminus: UPF0122 protein spr1167 (110 aa).

Belongs to the UPF0122 family.

Its function is as follows. Might take part in the signal recognition particle (SRP) pathway. This is inferred from the conservation of its genetic proximity to ftsY/ffh. May be a regulatory protein. The sequence is that of UPF0122 protein spr1167 from Streptococcus pneumoniae (strain ATCC BAA-255 / R6).